A 263-amino-acid chain; its full sequence is Phosphatidylglycerol--prolipoprotein diacylglyceryl transferase (263 aa).

The next 4 membrane-spanning stretches (helical) occupy residues 6 to 26, 50 to 70, 85 to 105, and 112 to 132; these read VIFSIGPVSIYWYSLAYVLGI, LLTATIVGIILGGRLGYVLIY, TWEGGMSFHGGAIGVLLAVII, and IPTFYALDLVSCGVPIGLFLG. A 1,2-diacyl-sn-glycero-3-phospho-(1'-sn-glycerol) is bound at residue Arg-133. Helical transmembrane passes span 169–189, 197–217, and 233–253; these read LYEALFEGLLLFAVANSLFFL, GALTGIAVMWYGIARFFVEFF, and MGQLLSIPMVLLGMLVYLGAL.

Belongs to the Lgt family.

Its subcellular location is the cell membrane. The catalysed reaction is L-cysteinyl-[prolipoprotein] + a 1,2-diacyl-sn-glycero-3-phospho-(1'-sn-glycerol) = an S-1,2-diacyl-sn-glyceryl-L-cysteinyl-[prolipoprotein] + sn-glycerol 1-phosphate + H(+). Its pathway is protein modification; lipoprotein biosynthesis (diacylglyceryl transfer). In terms of biological role, catalyzes the transfer of the diacylglyceryl group from phosphatidylglycerol to the sulfhydryl group of the N-terminal cysteine of a prolipoprotein, the first step in the formation of mature lipoproteins. This Wolbachia pipientis wMel protein is Phosphatidylglycerol--prolipoprotein diacylglyceryl transferase.